Reading from the N-terminus, the 476-residue chain is Bifunctional protein HldE (476 aa).

The segment at 1 to 319 is ribokinase; sequence MKVTLPAFEK…GALASHQGES (319 aa). 195–198 serves as a coordination point for ATP; the sequence is NMSE. Residue D264 is part of the active site. Residues 345–476 are cytidylyltransferase; the sequence is MTNGCFDILH…SIIQNIMARQ (132 aa).

The protein in the N-terminal section; belongs to the carbohydrate kinase PfkB family. This sequence in the C-terminal section; belongs to the cytidylyltransferase family. As to quaternary structure, homodimer.

The catalysed reaction is D-glycero-beta-D-manno-heptose 7-phosphate + ATP = D-glycero-beta-D-manno-heptose 1,7-bisphosphate + ADP + H(+). It catalyses the reaction D-glycero-beta-D-manno-heptose 1-phosphate + ATP + H(+) = ADP-D-glycero-beta-D-manno-heptose + diphosphate. The protein operates within nucleotide-sugar biosynthesis; ADP-L-glycero-beta-D-manno-heptose biosynthesis; ADP-L-glycero-beta-D-manno-heptose from D-glycero-beta-D-manno-heptose 7-phosphate: step 1/4. It participates in nucleotide-sugar biosynthesis; ADP-L-glycero-beta-D-manno-heptose biosynthesis; ADP-L-glycero-beta-D-manno-heptose from D-glycero-beta-D-manno-heptose 7-phosphate: step 3/4. Catalyzes the phosphorylation of D-glycero-D-manno-heptose 7-phosphate at the C-1 position to selectively form D-glycero-beta-D-manno-heptose-1,7-bisphosphate. Its function is as follows. Catalyzes the ADP transfer from ATP to D-glycero-beta-D-manno-heptose 1-phosphate, yielding ADP-D-glycero-beta-D-manno-heptose. The chain is Bifunctional protein HldE from Shewanella denitrificans (strain OS217 / ATCC BAA-1090 / DSM 15013).